A 65-amino-acid chain; its full sequence is MAVPKRKKSRANTRARRSQWKASVPGFARLEERGRPVFYLPHRARRILDSNGNELFMEYKGRRVG.

Belongs to the bacterial ribosomal protein bL32 family.

The polypeptide is Large ribosomal subunit protein bL32 (Tropheryma whipplei (strain TW08/27) (Whipple's bacillus)).